A 223-amino-acid chain; its full sequence is Deoxyribose-phosphate aldolase (223 aa).

D89 functions as the Proton donor/acceptor in the catalytic mechanism. The Schiff-base intermediate with acetaldehyde role is filled by K152. K181 (proton donor/acceptor) is an active-site residue.

It belongs to the DeoC/FbaB aldolase family. DeoC type 1 subfamily.

Its subcellular location is the cytoplasm. The catalysed reaction is 2-deoxy-D-ribose 5-phosphate = D-glyceraldehyde 3-phosphate + acetaldehyde. It functions in the pathway carbohydrate degradation; 2-deoxy-D-ribose 1-phosphate degradation; D-glyceraldehyde 3-phosphate and acetaldehyde from 2-deoxy-alpha-D-ribose 1-phosphate: step 2/2. Functionally, catalyzes a reversible aldol reaction between acetaldehyde and D-glyceraldehyde 3-phosphate to generate 2-deoxy-D-ribose 5-phosphate. The protein is Deoxyribose-phosphate aldolase of Bacillus cereus (strain Q1).